Here is an 88-residue protein sequence, read N- to C-terminus: Small ribosomal subunit protein bS20 (88 aa).

Residues 1-25 (MANTPSAKKAARKIERRTAVNRARR) form a disordered region.

Belongs to the bacterial ribosomal protein bS20 family.

In terms of biological role, binds directly to 16S ribosomal RNA. This chain is Small ribosomal subunit protein bS20, found in Azorhizobium caulinodans (strain ATCC 43989 / DSM 5975 / JCM 20966 / LMG 6465 / NBRC 14845 / NCIMB 13405 / ORS 571).